The primary structure comprises 543 residues: Intermediate filament protein ifb-2 (543 aa).

Residues 1–10 (MSAVSYSMHR) show a composition bias toward polar residues. The disordered stretch occupies residues 1-27 (MSAVSYSMHRTTTTTSSSSHGGVSAGH). Positions 1–42 (MSAVSYSMHRTTTTTSSSSHGGVSAGHAAEEFVASAEREKQE) are head. One can recognise an IF rod domain in the interval 39–388 (EKQEMQQLNS…KLVESEEGRF (350 aa)). The segment at 43–74 (MQQLNSRLEVYISRVRQLEDRNKELVIELDTL) is coil 1A. Residues 75–88 (RGSLGNDIGQIKFK) are linker 1. Residues 89 to 223 (FNDSLVKVRR…RIHSQEITEL (135 aa)) form a coil 1B region. Residues 224–240 (RTLLAQAPADTREFFKN) are linker 12. The segment at 241–387 (ELALAIREIK…RKLVESEEGR (147 aa)) is coil 2. Positions 388 to 542 (FTHVGQGVVV…SHIQTTVASS (155 aa)) are tail. The LTD domain maps to 420–538 (TRSSFKRHAK…IEKASHIQTT (119 aa)).

It belongs to the intermediate filament family. As to expression, expression is restricted to a discrete circumferential subapical layer within the intestinal terminal web (known as the 'endotube'); this layer joins directly to the apical junction complexes that connect adjacent gut cells.

The protein resides in the cytoplasm. Its function is as follows. Cytoplasmic intermediate filaments provide mechanical strength to cells. Not essential protein. Component of the terminal web (organelle-depleted, intermediate filament-rich layer of cytoplasm that underlies the apical microvilli of polarized epithelial cells) in embryonic through to adult gut cells. Correct localization of filaments requires let-413. The polypeptide is Intermediate filament protein ifb-2 (ifb-2) (Caenorhabditis elegans).